Consider the following 616-residue polypeptide: Mitochondrial Rho GTPase 2 (616 aa).

Topologically, residues 1-590 (MKRDVRILLL…HDTELSTASF (590 aa)) are cytoplasmic. In terms of domain architecture, Miro 1 spans 2–168 (KRDVRILLLG…FYYAQKAVLH (167 aa)). 4 residues coordinate GTP: Gly16, Lys17, Thr18, and Ser19. Thr18 provides a ligand contact to Mg(2+). Asp57 is a Mg(2+) binding site. 6 residues coordinate GTP: Ser59, Asn118, Lys119, Asp121, Ala149, and Lys150. EF-hand domains lie at 184-219 (QCKK…CFGN) and 304-339 (FGYQ…FPYT). Ca(2+)-binding residues include Asp199, Asn201, Glu208, Asp317, Asp319, Asp321, and Glu328. Positions 416-577 (RNVFLCRVIG…YSKLATAAAF (162 aa)) constitute a Miro 2 domain. Residues Gly428, Gly430, Lys431, Ser432, and Ala433 each contribute to the GTP site. Residue Ser432 coordinates Mg(2+). Glu474 serves as a coordination point for Mg(2+). Lys528, Asp530, and Cys559 together coordinate GTP. A helical; Anchor for type IV membrane protein transmembrane segment spans residues 591–613 (WLRVALGATVAAVVGFTLYKALL). At 614–616 (RSK) the chain is on the mitochondrial intermembrane side.

This sequence belongs to the mitochondrial Rho GTPase family. As to quaternary structure, homodimer.

Its subcellular location is the mitochondrion outer membrane. It carries out the reaction GTP + H2O = GDP + phosphate + H(+). The catalysed reaction is ATP + H2O = ADP + phosphate + H(+). The enzyme catalyses UTP + H2O = UDP + phosphate + H(+). Functionally, atypical mitochondrial nucleoside-triphosphatase (NTPase) involved in mitochondrial trafficking. Probably involved in control of anterograde transport of mitochondria and their subcellular distribution. Can hydrolyze GTP, ATP and UTP. The protein is Mitochondrial Rho GTPase 2 (rhot2) of Xenopus tropicalis (Western clawed frog).